A 412-amino-acid polypeptide reads, in one-letter code: Inositol polyphosphate-5-phosphatase A (412 aa).

Cysteine 409 carries the S-farnesyl cysteine lipid modification. The propeptide at 410-412 is removed in mature form; the sequence is VVQ.

This sequence belongs to the inositol 1,4,5-trisphosphate 5-phosphatase type I family. Interacts with TASOR. Isoprenylation at Cys-409 is required for localization at the membrane. Expressed at high levels in cerebellar Purkinje cells (at protein level). Expressed in Sertoli cells of the testis.

It localises to the cell membrane. Its subcellular location is the cell projection. The protein localises to the dendrite. The enzyme catalyses 1D-myo-inositol 1,4,5-trisphosphate + H2O = 1D-myo-inositol 1,4-bisphosphate + phosphate. The catalysed reaction is 1D-myo-inositol 1,3,4,5-tetrakisphosphate + H2O = 1D-myo-inositol 1,3,4-trisphosphate + phosphate. Functionally, phosphatase that specifically hydrolyzes the 5-phosphate of inositol 1,4,5-trisphosphate to inositol 1,4-bisphosphate, and inositol 1,3,4,5-tetrasphosphate to inositol 1,3,4-trisphosphate. Plays a crucial role in the survival of cerebellar Purkinje cells. This chain is Inositol polyphosphate-5-phosphatase A (Inpp5a), found in Mus musculus (Mouse).